A 169-amino-acid polypeptide reads, in one-letter code: Putative glycine cleavage system H protein, mitochondrial (169 aa).

Residues 60 to 142 enclose the Lipoyl-binding domain; sequence VGTVGITSYA…EEEGWICKIK (83 aa). Lys-101 carries the post-translational modification N6-lipoyllysine. Ser-131 carries the phosphoserine modification.

The protein belongs to the GcvH family. In terms of assembly, component of the glycine decarboxylase complex (GDC), which is composed of four proteins: P, T, L and H. It depends on (R)-lipoate as a cofactor.

The protein resides in the mitochondrion. The glycine cleavage system (glycine decarboxylase complex) catalyzes the degradation of glycine. The H protein shuttles the methylamine group of glycine from the P protein to the T protein. This Schizosaccharomyces pombe (strain 972 / ATCC 24843) (Fission yeast) protein is Putative glycine cleavage system H protein, mitochondrial (gcv3).